The following is a 261-amino-acid chain: Ribonuclease HII (261 aa).

The segment covering 1–20 (MIRDKSAKRPAKDAPKKAAV) has biased composition (basic and acidic residues). Residues 1 to 23 (MIRDKSAKRPAKDAPKKAAVKEA) form a disordered region. An RNase H type-2 domain is found at 42–230 (WPVAGCDEAG…VAAARAKHMP (189 aa)). 3 residues coordinate a divalent metal cation: Asp48, Glu49, and Asp139.

This sequence belongs to the RNase HII family. Mn(2+) serves as cofactor. Mg(2+) is required as a cofactor.

It localises to the cytoplasm. It carries out the reaction Endonucleolytic cleavage to 5'-phosphomonoester.. Its function is as follows. Endonuclease that specifically degrades the RNA of RNA-DNA hybrids. This Bradyrhizobium diazoefficiens (strain JCM 10833 / BCRC 13528 / IAM 13628 / NBRC 14792 / USDA 110) protein is Ribonuclease HII.